Reading from the N-terminus, the 4042-residue chain is Polyketide synthase-nonribosomal peptide synthetase phmA (4042 aa).

The Ketosynthase family 3 (KS3) domain occupies 10 to 411 (NEPIAIVGSA…GANAHAILEA (402 aa)). The segment at 519–837 (VFTGQGAQWA…TGLLSRDRDD (319 aa)) is acyl transferase. The tract at residues 909-1042 (HELLGTKCPD…GRISALFGPP (134 aa)) is N-terminal hotdog fold. A dehydratase (DH) domain region spans residues 909 to 1208 (HELLGTKCPD…LHTKPLGHAT (300 aa)). Residues 909 to 1210 (HELLGTKCPD…TKPLGHATPE (302 aa)) enclose the PKS/mFAS DH domain. His-941 serves as the catalytic Proton acceptor; for dehydratase activity. The interval 1057–1210 (MIDVDPEQFY…TKPLGHATPE (154 aa)) is C-terminal hotdog fold. Catalysis depends on Asp-1117, which acts as the Proton donor; for dehydratase activity. The interval 1349–1572 (DDMLNDFYVK…VDEHVEFIRN (224 aa)) is methyltransferase (MT) domain. The interval 2073–2246 (TYWLVGLTGG…AGSVINIGAI (174 aa)) is ketoreductase (KR)domain. One can recognise a Carrier 1 domain in the interval 2351–2433 (ATTADEVNEA…ELVSAAQEQL (83 aa)). Residue Ser-2393 is modified to O-(pantetheine 4'-phosphoryl)serine. Disordered stretches follow at residues 2460 to 2504 (KTET…SKDA) and 2535 to 2554 (ATRS…PEND). Over residues 2479-2490 (EVDEEEQEEDEA) the composition is skewed to acidic residues. Over residues 2495–2504 (NFFSSASKDA) the composition is skewed to polar residues. A compositionally biased stretch (low complexity) spans 2536-2549 (TRSKTSSSSSSFTS). The segment at 2584–3019 (RVSPMSFGQA…LGRPPLYDPQ (436 aa)) is condensation. Positions 3047-3443 (EMASRFGSQI…TADGLVLEGR (397 aa)) are adenylation. The Carrier 2 domain occupies 3562 to 3642 (KENKSPESEL…AMLNLISPAS (81 aa)). Ser-3602 is modified (O-(pantetheine 4'-phosphoryl)serine). The interval 3703–3924 (ITGASGFLGK…DFVSVESVAH (222 aa)) is reductase-like.

Belongs to the NRP synthetase family.

It functions in the pathway mycotoxin biosynthesis. In terms of biological role, hybrid PKS-NRPS synthetase; part of the gene cluster that mediates the biosynthesis of the mycotoxins phomacins, leucine-derived cytochalasans with potent actin polymerization-inhibitory activities and monocot-specific antigerminative activities. The first step in the pathway is catalyzed by the hybrid PKS-NRPS phmA, assisted by the enoyl reductase phmE, that are responsible for fusion of the leucine precursor and the polyketide backbone to produce a 2-pyrrolidone intermediate. The polyketide synthase module (PKS) of phmA is responsible for the synthesis of the polyketide backbone and the downstream nonribosomal peptide synthetase (NRPS) amidates the carboxyl end of the polyketide with the leucine precursor. Because phmA lacks a designated enoylreductase (ER) domain, the required activity is provided the enoyl reductase phmE. Reduction by the hydrolyase phmG, followed by dehydration and intra-molecular Diels-Alder cyclization by the Diels-Alderase phmD then yield the required isoindolone-fused macrocycle. A number of oxidative steps catalyzed by the tailoring cytochrome P450 monooxygenase phmB, the FAD-linked oxidoreductase phmC and the short-chain dehydrogenase/reductase phmF, are further required to afford the final products, phomacin D and phomacin E. This Phaeosphaeria nodorum (strain SN15 / ATCC MYA-4574 / FGSC 10173) (Glume blotch fungus) protein is Polyketide synthase-nonribosomal peptide synthetase phmA.